We begin with the raw amino-acid sequence, 566 residues long: Chondroitin sulfate proteoglycan 5 (566 aa).

The signal sequence occupies residues 1–30; it reads MGRAGGGGPDWGPPPVLLLLGVTLVLTAGA. Residues 31–423 are Extracellular-facing; the sequence is VPARETGSAI…SIITDFQVMC (393 aa). Residue Ser-38 is glycosylated (O-linked (Xyl...) (chondroitin sulfate) serine). The tract at residues 56–93 is disordered; the sequence is ANDTREEAGLPAAGEDETSWTERGSEMAAVGPGVGPEE. N-linked (GlcNAc...) asparagine glycosylation occurs at Asn-57. O-linked (GalNAc...) threonine glycosylation occurs at Thr-76. O-linked (Xyl...) (chondroitin sulfate) serine glycosylation is present at Ser-123. A glycan (O-linked (GalNAc...) threonine) is linked at Thr-132. Disordered stretches follow at residues 137–173, 218–249, and 263–327; these read DEAL…GPEL, DSEG…TPSW, and ESDF…PPQH. Residue Ser-143 is glycosylated (O-linked (GalNAc...) serine). O-linked (GalNAc...) threonine glycans are attached at residues Thr-144, Thr-153, and Thr-155. Ser-156 and Ser-160 each carry an O-linked (GalNAc...) serine glycan. Residues 163 to 173 are compositionally biased toward basic and acidic residues; that stretch reads VHDKPSVGPEL. Residue Thr-235 is glycosylated (O-linked (GalNAc...) threonine). The segment at 265–301 is interaction with TNC and TNR; that stretch reads DFYPTTSFYDDLEEEEEEEEDKDTVGGGDLEDENDLL. Acidic residues predominate over residues 274-286; that stretch reads DDLEEEEEEEEDK. Residues Asn-355 and Asn-367 are each glycosylated (N-linked (GlcNAc...) asparagine). In terms of domain architecture, EGF-like spans 371-413; the sequence is RSVCDLFPSYCHNGGQCYLVENIGAFCRCNTQDYIWHKGMRCE. Disulfide bonds link Cys-374-Cys-387, Cys-381-Cys-397, and Cys-399-Cys-412. A phosphoserine mark is found at Gly-394 and Phe-396. Cys-397 carries the phosphothreonine modification. The chain crosses the membrane as a helical span at residues 424-444; it reads VAVGSAALVLLLLFMMTVFFA. An interaction with GOPC region spans residues 442 to 460; the sequence is FFAKKLYLLKTENTKLRRT. Over 445-566 the chain is Cytoplasmic; that stretch reads KKLYLLKTEN…GVNCLQNNLT (122 aa). Residues Ser-467, Ser-475, and Ser-477 each carry the phosphoserine modification. The residue at position 478 (Thr-478) is a Phosphothreonine. 2 positions are modified to phosphoserine: Ser-483 and Ser-543. The disordered stretch occupies residues 531–566; it reads KEEESFNIQNSMSPKLEGGKGDQDDLGVNCLQNNLT.

In terms of assembly, binds TNR and probably TNC. Interacts with ERBB3 and GOPC. Interacts with MDK; this interaction is independent of the presence of chondroitin sulfate chains and promotes elongation of oligodendroglial precursor-like cells. N-glycosylated. Post-translationally, O-glycosylated; contains chondroitin sulfate glycans. Part-time proteoglycan, expressed in part as a proteoglycan exhibiting chondroitin sulfate glycans and in part as a non-proteoglycan form. The relative amount of both forms depends on tissues and tissue maturation. In the cerebellum the 2 forms coexist while in the cerebrum the proteoglycan form is predominant. In terms of processing, phosphorylated; in intracellular and extracellular parts. As to expression, expressed in olfactory bulb, hippocampus, brain stem, spinal cord, cerebrum and cerebellum. Expressed by Purkinje cells in the cerebellum (at protein level). Expressed in immature and mature cerebellum (isoform 1, isoform 2 and isoform 3).

The protein resides in the cell membrane. It localises to the synaptic cell membrane. The protein localises to the endoplasmic reticulum membrane. Its subcellular location is the golgi apparatus membrane. It is found in the cell surface. The protein resides in the secreted. Its function is as follows. May function as a growth and differentiation factor involved in neuritogenesis. May induce ERBB3 activation. The polypeptide is Chondroitin sulfate proteoglycan 5 (Cspg5) (Mus musculus (Mouse)).